Reading from the N-terminus, the 183-residue chain is 3-hydroxydecanoyl-[acyl-carrier-protein] dehydratase (183 aa).

The active site involves His-77.

Belongs to the thioester dehydratase family. FabA subfamily. As to quaternary structure, homodimer.

It localises to the cytoplasm. The enzyme catalyses a (3R)-hydroxyacyl-[ACP] = a (2E)-enoyl-[ACP] + H2O. The catalysed reaction is (3R)-hydroxydecanoyl-[ACP] = (2E)-decenoyl-[ACP] + H2O. It carries out the reaction (2E)-decenoyl-[ACP] = (3Z)-decenoyl-[ACP]. Its pathway is lipid metabolism; fatty acid biosynthesis. In terms of biological role, necessary for the introduction of cis unsaturation into fatty acids. Catalyzes the dehydration of (3R)-3-hydroxydecanoyl-ACP to E-(2)-decenoyl-ACP and then its isomerization to Z-(3)-decenoyl-ACP. Can catalyze the dehydratase reaction for beta-hydroxyacyl-ACPs with saturated chain lengths up to 16:0, being most active on intermediate chain length. In Hahella chejuensis (strain KCTC 2396), this protein is 3-hydroxydecanoyl-[acyl-carrier-protein] dehydratase.